We begin with the raw amino-acid sequence, 227 residues long: Cytochrome c oxidase subunit 2 (227 aa).

Residues 1–14 (MAYPFQLGFQDASS) are Mitochondrial intermembrane-facing. A helical membrane pass occupies residues 15 to 45 (PIMEELLHFHDHTLMIVFLISSLVLYIISLM). Over 46–59 (LTTKLTHTSTMDAQ) the chain is Mitochondrial matrix. The helical transmembrane segment at 60 to 87 (EVETIWTILPAIILILIALPSLRILYMM) threads the bilayer. Residues 88-227 (DEINNPSLTV…HFENWSLSMI (140 aa)) are Mitochondrial intermembrane-facing. Residues H161, C196, E198, C200, H204, and M207 each coordinate Cu cation. E198 is a Mg(2+) binding site.

This sequence belongs to the cytochrome c oxidase subunit 2 family. As to quaternary structure, component of the cytochrome c oxidase (complex IV, CIV), a multisubunit enzyme composed of 14 subunits. The complex is composed of a catalytic core of 3 subunits MT-CO1, MT-CO2 and MT-CO3, encoded in the mitochondrial DNA, and 11 supernumerary subunits COX4I, COX5A, COX5B, COX6A, COX6B, COX6C, COX7A, COX7B, COX7C, COX8 and NDUFA4, which are encoded in the nuclear genome. The complex exists as a monomer or a dimer and forms supercomplexes (SCs) in the inner mitochondrial membrane with NADH-ubiquinone oxidoreductase (complex I, CI) and ubiquinol-cytochrome c oxidoreductase (cytochrome b-c1 complex, complex III, CIII), resulting in different assemblies (supercomplex SCI(1)III(2)IV(1) and megacomplex MCI(2)III(2)IV(2)). Found in a complex with TMEM177, COA6, COX18, COX20, SCO1 and SCO2. Interacts with TMEM177 in a COX20-dependent manner. Interacts with COX20. Interacts with COX16. Cu cation serves as cofactor.

Its subcellular location is the mitochondrion inner membrane. It carries out the reaction 4 Fe(II)-[cytochrome c] + O2 + 8 H(+)(in) = 4 Fe(III)-[cytochrome c] + 2 H2O + 4 H(+)(out). In terms of biological role, component of the cytochrome c oxidase, the last enzyme in the mitochondrial electron transport chain which drives oxidative phosphorylation. The respiratory chain contains 3 multisubunit complexes succinate dehydrogenase (complex II, CII), ubiquinol-cytochrome c oxidoreductase (cytochrome b-c1 complex, complex III, CIII) and cytochrome c oxidase (complex IV, CIV), that cooperate to transfer electrons derived from NADH and succinate to molecular oxygen, creating an electrochemical gradient over the inner membrane that drives transmembrane transport and the ATP synthase. Cytochrome c oxidase is the component of the respiratory chain that catalyzes the reduction of oxygen to water. Electrons originating from reduced cytochrome c in the intermembrane space (IMS) are transferred via the dinuclear copper A center (CU(A)) of subunit 2 and heme A of subunit 1 to the active site in subunit 1, a binuclear center (BNC) formed by heme A3 and copper B (CU(B)). The BNC reduces molecular oxygen to 2 water molecules using 4 electrons from cytochrome c in the IMS and 4 protons from the mitochondrial matrix. This Oryctolagus cuniculus (Rabbit) protein is Cytochrome c oxidase subunit 2 (MT-CO2).